The following is a 486-amino-acid chain: Serine/threonine-protein kinase 33 (486 aa).

The tract at residues 39 to 100 is disordered; it reads VVEMSQTSST…WGRGNFTEGK (62 aa). A compositionally biased stretch (polar residues) spans 41–53; sequence EMSQTSSTGSSEF. The span at 57-66 shows a compositional bias: basic and acidic residues; the sequence is PEKRKEKGAS. Polar residues predominate over residues 68 to 80; the sequence is DVTSGKDSPSKSS. The region spanning 116–381 is the Protein kinase domain; sequence YTFGRILGQG…AKELLDNQWL (266 aa). ATP contacts are provided by residues 122–130 and K145; that span reads LGQGSFGMV. D238 functions as the Proton acceptor in the catalytic mechanism. Residues 402–451 form a disordered region; sequence KNNPESDEESTTDQRDSRSGQEESKVYQPSRNVPDVSNSSDEEEGKQVGR. S407 is modified (phosphoserine). The segment covering 413–426 has biased composition (basic and acidic residues); sequence TDQRDSRSGQEESK. Polar residues predominate over residues 428-440; the sequence is YQPSRNVPDVSNS.

The protein belongs to the protein kinase superfamily. CAMK Ser/Thr protein kinase family. CaMK subfamily. In terms of assembly, interacts with vimentin/VIM. Autophosphorylated.

It localises to the cytoplasm. The protein localises to the perinuclear region. The catalysed reaction is L-seryl-[protein] + ATP = O-phospho-L-seryl-[protein] + ADP + H(+). It carries out the reaction L-threonyl-[protein] + ATP = O-phospho-L-threonyl-[protein] + ADP + H(+). Functionally, serine/threonine protein kinase which phosphorylates vimentin/VIM. Therefore may play a specific role in the dynamic behavior of the intermediate filament cytoskeleton. The polypeptide is Serine/threonine-protein kinase 33 (STK33) (Bos taurus (Bovine)).